The following is a 1577-amino-acid chain: MILLHFVYSLWALLLIPLINAEEFTPKVTKTIAQDSFEILSFDDSNTLIRKQDASVTISFDDGETWEKVEGIEDEITWIYIDPFNRHDRAVATSMYESRLYITNDQGKSWERITLPDSEKNISSRGCYIETHPLNKNYFLAKCNYCEKTEVDNEENSGDEEGAPVIFNITHCTDKVFASNDGGKSFSEIKSSLERNENSAISISDCGFAKTGKDSDLESSDTSIICLFQNMQLIMDEFSSPYTESKLVLTTDWGKSLKEFDQFKDKVVNGYRILKSHMVVITQGDRYNDMSSMDVWVSNDLSNFKMAYMPTQLRHSMQGEIYEDAMGRIILPMSRERSDQEEDKGIVSEILISDSQGLKFSPIPWTANEVFGYINLYQPTYLKGTMIASLYPLSRRRNRKGKAKGVKNKGVTKISVDNGLTWTVLKVVDPDNADSFDCDITDFENCSLQNMFYTREGSTPTAGILMTTGIVGDGSVFDWGDQRTFISRDGGLTWKLAFDFPCLYAVGDYGNVIVAIPYNADEDDDPQSEFYYSLDQGKTWTEYQLETTIYPNEVMNTTPDGSGAKFILNGFTLAHMDGTTNFIYAIDFSTAFNDKTCEENDFEDWNLAEGKCVNGVKYKIRRRKQDAQCLVKKVFEDLQLFETACDKCTEADYECAFEFVRDATGKCVPDYNLIVLSDVCDKTKKKTVPVKPLQLVKGDKCKKPMTVKSVDISCEGVPKKGTNDKEIVVTENKFDFKIQFYQYFDTVTDESLLMINSRGEAYISHDGGQTIRRVDSNGETIIEVVFNPYYNSSAYLFGSKGSIFSTHDRGYSFMTAKLPEARQLGMPLDFNAKAQDTFIYYGGKNCESILSPECHAVAYLTNDGGETFTEMLDNAIHCEFAGSLFKYPSNEDMVMCQVKEKSSQTRSLVSSTDFFQDDKNTVFENIIGYLSTGGYIIVAVPHENNELRAYVTIDGTEFAEAKFPYDEDVGKQEAFTILESEKGSIFLHLATNLVPGRDFGNLLKSNSNGTSFVTLEHAVNRNTFGYVDFEKIQGLEGIILTNIVSNSDKVAENKEDKQLKTKITFNEGSDWNFLKPPKRDSEGKKFSCSSKSLDECSLHLHGYTERKDIRDTYSSGSALGMMFGVGNVGPNLLPYKECSTFFTTDGGETWAEVKKTPHQWEYGDHGGILVLVPENSETDSISYSTDFGKTWKDYKFCADKVLVKDITTVPRDSALRFLLFGEAADIGGSSFRTYTIDFRNIFERQCDFDITGKESADYKYSPLSSKSNCLFGHQTEFLRKTDENCFIGNIPLSEFSRNIKNCSCTRQDFECDYNFYKANDGTCKLVKGLSPANAADVCKKEPDLIEYFESSGYRKIPLSTCEGGLKLDAPSSPHACPGKEKEFKEKYSVSAGPFAFIFISILLIIFFAAWFVYDRGIRRNGGFARFGEIRLGDDGLIENNNTDRVVNNIVKSGFYVFSNIGSLLQHTKTNIAHVISKIRERFGNRTGPSYSSLIHDQFLDEADDLLAGHDEDANDLSSFMDQGSNFEIEEDDVPTLEEEHTSYTDQPTTTDVPDALPEGNEENIDRPDSTAPSNENQ.

A signal peptide spans 1–21 (MILLHFVYSLWALLLIPLINA). Residues 22–1391 (EEFTPKVTKT…EFKEKYSVSA (1370 aa)) lie on the Lumenal side of the membrane. BNR repeat units lie at residues 58–68 (ISFDDGETWEK) and 101–111 (YITNDQGKSWE). 2 N-linked (GlcNAc...) asparagine glycosylation sites follow: N121 and N168. BNR repeat units follow at residues 179-187 (SNDGGKSFS) and 414-423 (ISVDNGLTWT). N-linked (GlcNAc...) asparagine glycosylation occurs at N445. BNR repeat units lie at residues 485–495 (FISRDGGLTWK), 531–541 (YYSLDQGKTWT), and 762–771 (YISHDGGQTI). N791 carries an N-linked (GlcNAc...) asparagine glycan. One copy of the BNR 8 repeat lies at 859–869 (YLTNDGGETFT). A glycan (N-linked (GlcNAc...) asparagine) is linked at N1008. BNR repeat units lie at residues 1141 to 1150 (FFTTDGGETW) and 1183 to 1192 (YSTDFGKTWK). Residue N1301 is glycosylated (N-linked (GlcNAc...) asparagine). The chain crosses the membrane as a helical span at residues 1392–1412 (GPFAFIFISILLIIFFAAWFV). At 1413–1577 (YDRGIRRNGG…DSTAPSNENQ (165 aa)) the chain is on the cytoplasmic side. The segment at 1531–1577 (DDVPTLEEEHTSYTDQPTTTDVPDALPEGNEENIDRPDSTAPSNENQ) is disordered.

This sequence belongs to the VPS10-related sortilin family.

It localises to the golgi apparatus. Its subcellular location is the trans-Golgi network membrane. The protein localises to the prevacuolar compartment membrane. In terms of biological role, functions as a sorting receptor in the Golgi compartment required for the intracellular sorting and delivery of soluble vacuolar proteins, like carboxypeptidase Y (CPY) and proteinase A. Executes multiple rounds of sorting by cycling between the late Golgi and a prevacuolar endosome-like compartment. Binds the Golgi-modified P2 form of CPY, and this interaction is dependent on the presence of an intact CPY vacuolar protein sorting signal. In Saccharomyces cerevisiae (strain Lalvin EC1118 / Prise de mousse) (Baker's yeast), this protein is Vacuolar protein sorting/targeting protein PEP1 (PEP1).